The sequence spans 474 residues: Glutamate--tRNA ligase (474 aa).

Positions 9–19 match the 'HIGH' region motif; it reads PSPTGFLHVGG. A 'KMSKS' region motif is present at residues 240-244; the sequence is KLSKR. Residue lysine 243 coordinates ATP.

Belongs to the class-I aminoacyl-tRNA synthetase family. Glutamate--tRNA ligase type 1 subfamily. As to quaternary structure, monomer.

It is found in the cytoplasm. It carries out the reaction tRNA(Glu) + L-glutamate + ATP = L-glutamyl-tRNA(Glu) + AMP + diphosphate. In terms of biological role, catalyzes the attachment of glutamate to tRNA(Glu) in a two-step reaction: glutamate is first activated by ATP to form Glu-AMP and then transferred to the acceptor end of tRNA(Glu). This is Glutamate--tRNA ligase from Photobacterium profundum (strain SS9).